The sequence spans 222 residues: Triosephosphate isomerase (222 aa).

9–11 (NYK) serves as a coordination point for substrate. Histidine 93 functions as the Electrophile in the catalytic mechanism. Glutamate 141 (proton acceptor) is an active-site residue. Residues isoleucine 146, glycine 181, and 202 to 203 (AS) each bind substrate.

This sequence belongs to the triosephosphate isomerase family. As to quaternary structure, homotetramer; dimer of dimers.

Its subcellular location is the cytoplasm. It catalyses the reaction D-glyceraldehyde 3-phosphate = dihydroxyacetone phosphate. Its pathway is carbohydrate biosynthesis; gluconeogenesis. The protein operates within carbohydrate degradation; glycolysis; D-glyceraldehyde 3-phosphate from glycerone phosphate: step 1/1. Functionally, involved in the gluconeogenesis. Catalyzes stereospecifically the conversion of dihydroxyacetone phosphate (DHAP) to D-glyceraldehyde-3-phosphate (G3P). This chain is Triosephosphate isomerase, found in Methanosarcina barkeri (strain Fusaro / DSM 804).